Here is a 366-residue protein sequence, read N- to C-terminus: G kinase-anchoring protein 1 (366 aa).

Positions 1–95 (MASAVLSSVL…SHSVCNVQHE (95 aa)) are interaction with IRS1. The segment at 20–105 (QVDSGSGSDS…LSLPNPVQKE (86 aa)) is disordered. A phosphoserine mark is found at Ser-23, Ser-25, and Ser-27. Over residues 39 to 50 (NGKSQTLGNKST) the composition is skewed to polar residues. Residues 46 to 77 (GNKSTANEKKREKRRKKKEQQQSEANELRNLA) are a coiled coil. Ser-106 is modified (phosphoserine; by PKG). Coiled coils occupy residues 129 to 160 (DLEK…QTKV), 250 to 299 (LKDG…MLQE), and 326 to 353 (VSSL…YQGG).

This sequence belongs to the GKAP1 family. Interacts with PRKG1 and IRS1.

Its subcellular location is the golgi apparatus. Its function is as follows. Regulates insulin-dependent IRS1 tyrosine phosphorylation in adipocytes by modulating the availability of IRS1 to IR tyrosine kinase. Its association with IRS1 is required for insulin-induced translocation of SLC2A4 to the cell membrane. Involved in TNF-induced impairment of insulin-dependent IRS1 tyrosine phosphorylation. This is G kinase-anchoring protein 1 (Gkap1) from Rattus norvegicus (Rat).